A 368-amino-acid chain; its full sequence is Protein L-Myc (368 aa).

Disordered regions lie at residues 39-79 (PPTS…RGHS), 112-179 (RLAP…EKRR), and 218-295 (FPPE…FLER). The span at 135-147 (LEASNPAPATQCQ) shows a compositional bias: polar residues. The segment covering 247–258 (EEEEEEEEEEEI) has biased composition (acidic residues). Basic and acidic residues predominate over residues 283–294 (DVTKRKNHNFLE). The bHLH domain maps to 285–337 (TKRKNHNFLERKRRNDLRSRFLALRDQVPTLASCSKAPKVVILSKALEYLQAL). The segment at 337–365 (LVGAEKKMATEKRQLRCRQQQLQKRIAYL) is leucine-zipper.

Efficient DNA binding requires dimerization with another bHLH protein. Binds DNA as a heterodimer with MAX.

The protein localises to the nucleus. The polypeptide is Protein L-Myc (Mycl) (Mus musculus (Mouse)).